The primary structure comprises 418 residues: 3-isopropylmalate dehydratase large subunit 1 (418 aa).

3 residues coordinate [4Fe-4S] cluster: Cys-298, Cys-358, and Cys-361.

It belongs to the aconitase/IPM isomerase family. LeuC type 2 subfamily. Heterodimer of LeuC and LeuD. It depends on [4Fe-4S] cluster as a cofactor.

The enzyme catalyses (2R,3S)-3-isopropylmalate = (2S)-2-isopropylmalate. It participates in amino-acid biosynthesis; L-leucine biosynthesis; L-leucine from 3-methyl-2-oxobutanoate: step 2/4. In terms of biological role, catalyzes the isomerization between 2-isopropylmalate and 3-isopropylmalate, via the formation of 2-isopropylmaleate. The sequence is that of 3-isopropylmalate dehydratase large subunit 1 from Thermotoga maritima (strain ATCC 43589 / DSM 3109 / JCM 10099 / NBRC 100826 / MSB8).